Reading from the N-terminus, the 190-residue chain is Potassium-transporting ATPase KdpC subunit (190 aa).

The chain crosses the membrane as a helical span at residues 10 to 30 (TFLFLLLITGGVYPLLTTALG).

Belongs to the KdpC family. The system is composed of three essential subunits: KdpA, KdpB and KdpC.

It is found in the cell inner membrane. Functionally, part of the high-affinity ATP-driven potassium transport (or Kdp) system, which catalyzes the hydrolysis of ATP coupled with the electrogenic transport of potassium into the cytoplasm. This subunit acts as a catalytic chaperone that increases the ATP-binding affinity of the ATP-hydrolyzing subunit KdpB by the formation of a transient KdpB/KdpC/ATP ternary complex. The polypeptide is Potassium-transporting ATPase KdpC subunit (Escherichia coli (strain SMS-3-5 / SECEC)).